We begin with the raw amino-acid sequence, 321 residues long: Peroxidase 4 (321 aa).

The N-terminal stretch at 1-25 (MASSSFSIVVVALGVLALFAGSSSA) is a signal peptide. The residue at position 26 (Gln-26) is a Pyrrolidone carboxylic acid. 4 cysteine pairs are disulfide-bonded: Cys-36–Cys-116, Cys-69–Cys-74, Cys-122–Cys-317, and Cys-201–Cys-226. His-67 serves as the catalytic Proton acceptor. Ca(2+) contacts are provided by Asp-68, Val-71, Gly-73, Asp-75, and Ser-77. Pro-164 is a binding site for substrate. His-194 is a binding site for heme b. Ca(2+) is bound at residue Thr-195. Residue Asn-210 is glycosylated (N-linked (GlcNAc...) asparagine). Ca(2+) is bound by residues Asp-241, Thr-244, and Asp-249.

This sequence belongs to the peroxidase family. Classical plant (class III) peroxidase subfamily. Requires heme b as cofactor. It depends on Ca(2+) as a cofactor.

The protein localises to the secreted. The enzyme catalyses 2 a phenolic donor + H2O2 = 2 a phenolic radical donor + 2 H2O. Its function is as follows. Removal of H(2)O(2), oxidation of toxic reductants, biosynthesis and degradation of lignin, suberization, auxin catabolism, response to environmental stresses such as wounding, pathogen attack and oxidative stress. These functions might be dependent on each isozyme/isoform in each plant tissue. The protein is Peroxidase 4 of Vitis vinifera (Grape).